A 333-amino-acid chain; its full sequence is MINRKLPLLDIHRHLDGNVRAQTILELGRQFNITLPADNVAALIPHVQVIDPEPNLMAFLQKLDWGVTVLGDYDACRRIAIENIEDAQAQGLDYVELRFSPYYMAQSQGLHPQGVVEAVIDGIKSATKGANVKANLIGILSRTYGVKVCQQELDALLAFKDDLVAVDLAGDEIGFPGELFVEHFKQVHDAYLAATIHAGEALGAPSIWQAINELGASRIGHGVKAIEDIELMNYLRDKRIGIESCLTSNIQTSTVNDLAQHPLKQFLDHGILACINTDDPAVEGIEIEHEYLVAAPQAGLSQADIEKAQANALEIAYLSYSDKKALLTMASTR.

Zn(2+)-binding residues include histidine 12 and histidine 14. Histidine 14, aspartate 16, and glycine 170 together coordinate substrate. Histidine 197 is a Zn(2+) binding site. The Proton donor role is filled by glutamate 200. Position 278 (aspartate 278) interacts with Zn(2+). Aspartate 279 serves as a coordination point for substrate.

Belongs to the metallo-dependent hydrolases superfamily. Adenosine and AMP deaminases family. Adenosine deaminase subfamily. Requires Zn(2+) as cofactor.

It carries out the reaction adenosine + H2O + H(+) = inosine + NH4(+). The enzyme catalyses 2'-deoxyadenosine + H2O + H(+) = 2'-deoxyinosine + NH4(+). Functionally, catalyzes the hydrolytic deamination of adenosine and 2-deoxyadenosine. In Pseudoalteromonas translucida (strain TAC 125), this protein is Adenosine deaminase.